A 622-amino-acid polypeptide reads, in one-letter code: Low affinity potassium transport system protein Kup (622 aa).

The next 12 membrane-spanning stretches (helical) occupy residues 9 to 29 (LSAVTLAAIGVVYGDIGTSPL), 46 to 66 (PDVVFGFLSLIFWMLILVVSV), 101 to 121 (ILVVLGLIGGSFFYGEVVITP), 137 to 157 (PALDPYIVPCSIAVLTLLFVI), 165 to 185 (VGKLFAPVMLVWFLTLALLGL), 213 to 233 (VSFFALGAVVLAITGVEALYA), 247 to 267 (WFTVVLPSLVLNYFGQGALLL), 276 to 296 (PFFLLAPDWALIPLLILATLA), 337 to 357 (IYIPVINWTLYLAVVLVIIGF), 363 to 383 (LAAAYGIAVTGTMVITSILFC), 395 to 415 (FLVVFLLMVLLIIDIPMFSAN), and 416 to 436 (VLKLFSGGWLPLSLGLVMFII).

Belongs to the HAK/KUP transporter (TC 2.A.72) family.

It is found in the cell inner membrane. The catalysed reaction is K(+)(in) + H(+)(in) = K(+)(out) + H(+)(out). Its function is as follows. Responsible for the low-affinity transport of potassium into the cell. Likely operates as a K(+):H(+) symporter. The chain is Low affinity potassium transport system protein Kup from Yersinia pestis bv. Antiqua (strain Antiqua).